The primary structure comprises 286 residues: uncharacterized protein (286 aa).

The region spanning 36-256 (ENPQHHPSIE…IKGCLLVQLK (221 aa)) is the Radical SAM core domain. The [4Fe-4S] cluster site is built by Cys-50, Cys-54, and Cys-57.

It depends on [4Fe-4S] cluster as a cofactor.

This is an uncharacterized protein from Methanocaldococcus jannaschii (strain ATCC 43067 / DSM 2661 / JAL-1 / JCM 10045 / NBRC 100440) (Methanococcus jannaschii).